The following is a 509-amino-acid chain: Maturase K (509 aa).

The protein belongs to the intron maturase 2 family. MatK subfamily.

The protein resides in the plastid. Its function is as follows. Usually encoded in the trnK tRNA gene intron. Probably assists in splicing its own and other chloroplast group II introns. This chain is Maturase K, found in Cuscuta reflexa (Southern Asian dodder).